We begin with the raw amino-acid sequence, 388 residues long: S-adenosylmethionine synthase (388 aa).

His-16 is a binding site for ATP. Asp-18 is a Mg(2+) binding site. Position 44 (Glu-44) interacts with K(+). Residues Glu-57 and Gln-100 each contribute to the L-methionine site. Residues 100-110 (QSPEIAQGVDR) form a flexible loop region. Residues 165-167 (DAK), Asp-240, 246-247 (RK), Ala-263, and Lys-267 each bind ATP. L-methionine is bound at residue Asp-240. Lys-271 is an L-methionine binding site.

The protein belongs to the AdoMet synthase family. Homotetramer; dimer of dimers. Requires Mg(2+) as cofactor. It depends on K(+) as a cofactor.

The protein resides in the cytoplasm. The enzyme catalyses L-methionine + ATP + H2O = S-adenosyl-L-methionine + phosphate + diphosphate. It functions in the pathway amino-acid biosynthesis; S-adenosyl-L-methionine biosynthesis; S-adenosyl-L-methionine from L-methionine: step 1/1. Functionally, catalyzes the formation of S-adenosylmethionine (AdoMet) from methionine and ATP. The overall synthetic reaction is composed of two sequential steps, AdoMet formation and the subsequent tripolyphosphate hydrolysis which occurs prior to release of AdoMet from the enzyme. This is S-adenosylmethionine synthase from Acinetobacter baylyi (strain ATCC 33305 / BD413 / ADP1).